The following is a 342-amino-acid chain: Methylthioribose-1-phosphate isomerase (342 aa).

Residues 49-51, arginine 86, and glutamine 187 contribute to the substrate site; that span reads RGA. The active-site Proton donor is aspartate 228. 238–239 provides a ligand contact to substrate; the sequence is NK.

This sequence belongs to the eIF-2B alpha/beta/delta subunits family. MtnA subfamily.

The enzyme catalyses 5-(methylsulfanyl)-alpha-D-ribose 1-phosphate = 5-(methylsulfanyl)-D-ribulose 1-phosphate. It functions in the pathway amino-acid biosynthesis; L-methionine biosynthesis via salvage pathway; L-methionine from S-methyl-5-thio-alpha-D-ribose 1-phosphate: step 1/6. In terms of biological role, catalyzes the interconversion of methylthioribose-1-phosphate (MTR-1-P) into methylthioribulose-1-phosphate (MTRu-1-P). In Klebsiella pneumoniae (strain 342), this protein is Methylthioribose-1-phosphate isomerase.